The chain runs to 89 residues: Small ribosomal subunit protein uS15 (89 aa).

Belongs to the universal ribosomal protein uS15 family. As to quaternary structure, part of the 30S ribosomal subunit. Forms a bridge to the 50S subunit in the 70S ribosome, contacting the 23S rRNA.

In terms of biological role, one of the primary rRNA binding proteins, it binds directly to 16S rRNA where it helps nucleate assembly of the platform of the 30S subunit by binding and bridging several RNA helices of the 16S rRNA. Functionally, forms an intersubunit bridge (bridge B4) with the 23S rRNA of the 50S subunit in the ribosome. The protein is Small ribosomal subunit protein uS15 of Lacticaseibacillus casei (strain BL23) (Lactobacillus casei).